The sequence spans 312 residues: Pyridoxal kinase (312 aa).

An N-acetylmethionine modification is found at Met-1. Positions 12 and 47 each coordinate pyridoxal. Thr-47 provides a ligand contact to pyridoxal 5'-phosphate. Ser-59 is subject to Phosphoserine. ATP is bound at residue Asp-113. Residue Asp-113 coordinates Na(+). Asp-118 contacts Mg(2+). Residue Thr-148 participates in Na(+) binding. An ATP-binding site is contributed by 150–153; it reads NQFE. Ser-164 is subject to Phosphoserine. Residue Thr-186 coordinates Na(+). ATP is bound at residue 186–187; it reads TS. At Ser-213 the chain carries Phosphoserine. ATP contacts are provided by residues 226 to 228 and Thr-233; that span reads VDP. 234–235 lines the pyridoxal 5'-phosphate pocket; it reads GD. Residue Asp-235 is the Proton acceptor of the active site. Position 285 is a phosphoserine (Ser-285).

It belongs to the pyridoxine kinase family. In terms of assembly, homodimer. Requires Zn(2+) as cofactor. It depends on Mg(2+) as a cofactor.

The protein resides in the cytoplasm. It localises to the cytosol. The catalysed reaction is pyridoxal + ATP = pyridoxal 5'-phosphate + ADP + H(+). It carries out the reaction pyridoxamine + ATP = pyridoxamine 5'-phosphate + ADP + H(+). It catalyses the reaction pyridoxine + ATP = pyridoxine 5'-phosphate + ADP + H(+). It functions in the pathway cofactor metabolism; pyridoxal 5'-phosphate salvage; pyridoxal 5'-phosphate from pyridoxal: step 1/1. It participates in cofactor metabolism; pyridoxal 5'-phosphate salvage; pyridoxine 5'-phosphate from pyridoxine: step 1/1. The protein operates within cofactor metabolism; pyridoxal 5'-phosphate salvage; pyridoxamine 5'-phosphate from pyridoxamine: step 1/1. With respect to regulation, activity is increased in the presence of K(+)or Na(+). Functionally, catalyzes the phosphorylation of the dietary vitamin B6 vitamers pyridoxal (PL), pyridoxine (PN) and pyridoxamine (PM) to form pyridoxal 5'-phosphate (PLP), pyridoxine 5'-phosphate (PNP) and pyridoxamine 5'-phosphate (PMP), respectively. PLP is the active form of vitamin B6, and acts as a cofactor for over 140 different enzymatic reactions. This Rattus norvegicus (Rat) protein is Pyridoxal kinase (Pdxk).